The sequence spans 669 residues: DNA mismatch repair protein MutL (669 aa).

The disordered stretch occupies residues 356–382 (FEQRQNTENNQEKTFSSEESNSKPFME). The span at 361–378 (NTENNQEKTFSSEESNSK) shows a compositional bias: polar residues.

This sequence belongs to the DNA mismatch repair MutL/HexB family.

Its function is as follows. This protein is involved in the repair of mismatches in DNA. It is required for dam-dependent methyl-directed DNA mismatch repair. May act as a 'molecular matchmaker', a protein that promotes the formation of a stable complex between two or more DNA-binding proteins in an ATP-dependent manner without itself being part of a final effector complex. The polypeptide is DNA mismatch repair protein MutL (Staphylococcus aureus (strain USA300)).